Consider the following 44-residue polypeptide: Alpha-amylase inhibitor helianthamide (44 aa).

3 disulfides stabilise this stretch: Cys-6-Cys-38, Cys-16-Cys-33, and Cys-20-Cys-39. Residues 7–10 are inhibitory motif; the sequence is YIYH.

The protein belongs to the sea anemone alpha-amylase inhibitor family.

The protein resides in the secreted. In terms of biological role, specific pancreatic alpha-amylase (AMY2A) inhibitor. The recombinant peptide inhibits human pancreatic (Ki=0.01 nM) and porcine pancreatic alpha-amylases (Ki=0.1 nM). The protein is Alpha-amylase inhibitor helianthamide of Stichodactyla helianthus (Sun anemone).